The primary structure comprises 423 residues: MKTITTARLPWAAQSFALGICLIALLGCNHAANKSSASRADVKPVTVKLVDSQATMETRSLFAFMQEQRRHSIMFGHQHETTQGLTITRTDGTQSDTFNAVGDFAAVYGWDTLSIVAPKAEGDIVAQVKKAYARGGIITVSSHFDNPKTDTQKGVWPVGTSWDQTPAVVDSLPGGAYNPVLNGYLDQVAEWANNLKDEQGRLIPVIFRLYHENTGSWFWWGDKQSTPEQYKQLFRYSVEYLRDVKGVRNFLYAYSPNNFWDVTEANYLERYPGDEWVDVLGFDTYGPVADNADWFRNVVANAALVARMAEARGKIPVISEIGIRAPDIEAGLYDNQWYRKLISGLKADPDAREIAFLLVWRNAPQGVPGPNGTQVPHYWVPANRPENINNGTLEDFQAFYADEFTAFNRDIEQVYQRPTLIVK.

A signal peptide spans 1-27 (MKTITTARLPWAAQSFALGICLIALLG). The GH26 domain maps to 56–409 (METRSLFAFM…YADEFTAFNR (354 aa)). The substrate site is built by Glu-121, His-143, and Trp-162. Glu-212 serves as the catalytic Proton donor. Substrate contacts are provided by Trp-217 and Tyr-285. Catalysis depends on Glu-320, which acts as the Nucleophile. Substrate-binding positions include 360-361 (WR) and His-377.

Belongs to the glycosyl hydrolase 26 family. Homodimer.

It carries out the reaction Random hydrolysis of (1-&gt;4)-beta-D-mannosidic linkages in mannans, galactomannans and glucomannans.. Functionally, catalyzes the endo hydrolysis of beta-1,4-linked mannan and galactomannan, but displays little activity towards other polysaccharides located in the plant cell wall. Preferentially hydrolyzes the larger oligosaccharides and has greater activity against non-substituted polysaccharides. It displays tight specificity for mannose at both the -2 and the -1 subsites. Appears to act in synergy with alpha-galactosidase (AgaA) to elicit hydrolysis of galactomannan. This chain is Mannan endo-1,4-beta-mannosidase, found in Cellvibrio japonicus (strain Ueda107) (Pseudomonas fluorescens subsp. cellulosa).